The primary structure comprises 215 residues: METTALTNLNYQQTHFVMSAPDIRHLPSDTGIEVAFAGRSNAGKSSALNTLTNQKSLARTSKTPGRTQLINLFEVADGKRLVDLPGYGYAEVPEEMKRKWQRALGEYLEKRQSLQGLVVLMDIRHPLKDLDQQMIEWAVDSNIAVLVLLTKADKLASGARKAQLNMVREAVLAFNGDVQVETFSSLKKQGVDKLRQKLDTWFSEMQPVEETQDGE.

In terms of domain architecture, EngB-type G spans 30-204; that stretch reads TGIEVAFAGR…RQKLDTWFSE (175 aa). GTP contacts are provided by residues 38–45, 65–69, 83–86, 150–153, and 183–185; these read GRSNAGKS, GRTQL, DLPG, TKAD, and FSS. Positions 45 and 67 each coordinate Mg(2+).

Belongs to the TRAFAC class TrmE-Era-EngA-EngB-Septin-like GTPase superfamily. EngB GTPase family. Mg(2+) is required as a cofactor.

Functionally, necessary for normal cell division and for the maintenance of normal septation. This chain is Probable GTP-binding protein EngB, found in Escherichia coli O1:K1 / APEC.